Reading from the N-terminus, the 183-residue chain is Transmembrane protein 154 (183 aa).

Positions 1–22 (MQAPRAALVFALVIALVPVGRG) are cleaved as a signal peptide. The Extracellular portion of the chain corresponds to 23–75 (NYEELENSGDTTVESERPNKVTIPSTFAAVTIKETLNANINSTNFAPDENQLE). Residues 76–96 (FILMVLIPLILLVLLLLSVVF) form a helical membrane-spanning segment. The Cytoplasmic segment spans residues 97–183 (LATYYKRKRT…SNHNPSDSES (87 aa)). Residues 163–183 (ECLPTLKEEKESNHNPSDSES) form a disordered region. Position 179 is a phosphoserine (Ser179).

The protein resides in the membrane. The chain is Transmembrane protein 154 (TMEM154) from Homo sapiens (Human).